Consider the following 928-residue polypeptide: MEIKEEGTSEEGQHFLPAAQANDPEDIQFTSIQKSPNEPQLEFILACKDLVAPVSDRKLNTVVQVSVIHPVEQTLTRYSSTEIVEGTKDPLFLTGVTFPSDYPIYEETRIKLTVYDVKDKPHDTIRTSVLPEHKDPPPEVARSFLGCASFKVGELLKSKEQLLSLSLRTSDGGKVVGTIEVSLVKMGEIEDGDTDHITTDVQGQKCALVYDSTAPESLSGKENLPFMNAVLRNPVCKLYRFPTSDNKWMRIREQMSESILSFHIPKELISLHIKEDLCRNQELKELGDLSPHWDNLRNNVLSHCDQMVTMYQDILTELSKETGSSFKSSSSKGEKTLEFVPINLHLQRMQVHSPHLKDALYDVITVGAPAAHFQGFKNGGLRKLLHRFETERRNTGYQFIYYSPENTAKAKEVLSSINQLQPLVATHADLLLTSASQHSPDSLRSSLKLLSEKTELFVHAFKDQLVRSALLALYTARPGGILRKPPSPKVSTEEKSSQHDSPQQLRRQDSIPHHSDYDEEEWDRVWANVGKSLNCIIAKVDKLIERDSRNDKSTGGDSSKDGDADPNLEDSLTSHPREDWYEQLHPLILTLKECMAEVVNRAKQSLTFVLLQELAYSLPQCLMLTLRRDIVFSQALAGLVCGFIIKLHTSLHDPGFLQQLHTVGLIVQYEGLLSTYSDEIGMLEDMAVGISDLRKVAFKITEATSNDVLPVLTGRREHYVVEVKLPATVFESLPLQIKEGQLLHVYPVLFNVGINEQQTLAERFGDVSLQESINQENFELVQEYYSIFMEKMPPDYISHFQEQNDLKGLLDNLHQNIQAKKRKNVEIMWLAATICRKLNGIRFTCCKSAKDRTSMSVTLEQCSILRDEHQLHKDFFIRALDCMRREGCRIENVLKNIKCRRYAFNMLQLMAFPKCYRPPEGTYGKADT.

Basic and acidic residues predominate over residues 1–13 (MEIKEEGTSEEGQ). Disordered stretches follow at residues 1 to 23 (MEIK…QAND), 481 to 516 (ILRK…HHSD), and 548 to 575 (SRND…LTSH). One can recognise a C2 domain in the interval 23–165 (DPEDIQFTSI…LKSKEQLLSL (143 aa)). 2 stretches are compositionally biased toward basic and acidic residues: residues 506 to 516 (RRQDSIPHHSD) and 548 to 563 (SRND…KDGD).

Belongs to the inositol 3,4-bisphosphate 4-phosphatase family.

It carries out the reaction a 1,2-diacyl-sn-glycero-3-phospho-(1D-myo-inositol-3,4-bisphosphate) + H2O = a 1,2-diacyl-sn-glycero-3-phospho-(1D-myo-inositol-3-phosphate) + phosphate. The enzyme catalyses 1D-myo-inositol 3,4-bisphosphate + H2O = 1D-myo-inositol 3-phosphate + phosphate. The catalysed reaction is 1D-myo-inositol 1,3,4-trisphosphate + H2O = 1D-myo-inositol 1,3-bisphosphate + phosphate. The protein operates within signal transduction; phosphatidylinositol signaling pathway. Its activity is regulated as follows. Strongly inhibited by inositol hexakisphosphate. Its function is as follows. Catalyzes the hydrolysis of the 4-position phosphate of phosphatidylinositol 3,4-bisphosphate, inositol 1,3,4-trisphosphate and inositol 3,4-bisphosphate. Plays a role in the late stages of macropinocytosis by dephosphorylating phosphatidylinositol 3,4-bisphosphate in membrane ruffles. The lipid phosphatase activity is critical for tumor suppressor function. Antagonizes the PI3K-AKT/PKB signaling pathway by dephosphorylating phosphoinositides and thereby modulating cell cycle progression and cell survival. The sequence is that of Type II inositol 3,4-bisphosphate 4-phosphatase (Inpp4b) from Rattus norvegicus (Rat).